The sequence spans 332 residues: MLLETQDALYVALELVIAALSVAGNVLVCAAVGTANTLQTPTNYFLVSLAAADVAVGLFAIPFAITISLGFCTDFYGCLFLACFVLVLTQSSIFSLLAVAVDRYLAICVPLRYKSLVTGTRARGVIAVLWVLAFGIGLTPFLGWNSKDSATNNCTEPWDGTTNESCCLVKCLFENVVPMSYMVYFNFFGCVLPPLLIMLVIYIKIFLVACRQLQRTELMDHSRTTLQREIHAAKSLAMIVGIFALCWLPVHAVNCVTLFQPAQGKNKPKWAMNMAILLSHANSVVNPIVYAYRNRDFRYTFHKIISRYLLCQADVKSGNGQAGVQPALGVGL.

Residues 1-8 (MLLETQDA) lie on the Extracellular side of the membrane. A helical membrane pass occupies residues 9 to 33 (LYVALELVIAALSVAGNVLVCAAVG). The Cytoplasmic segment spans residues 34–43 (TANTLQTPTN). A helical transmembrane segment spans residues 44–67 (YFLVSLAAADVAVGLFAIPFAITI). The Extracellular portion of the chain corresponds to 68-78 (SLGFCTDFYGC). Cys-78 and Cys-171 are joined by a disulfide. The helical transmembrane segment at 79 to 101 (LFLACFVLVLTQSSIFSLLAVAV) threads the bilayer. At 102 to 121 (DRYLAICVPLRYKSLVTGTR) the chain is on the cytoplasmic side. A helical transmembrane segment spans residues 122-144 (ARGVIAVLWVLAFGIGLTPFLGW). Over 145-178 (NSKDSATNNCTEPWDGTTNESCCLVKCLFENVVP) the chain is Extracellular. N-linked (GlcNAc...) asparagine glycans are attached at residues Asn-153 and Asn-163. Glu-174 provides a ligand contact to adenosine. The helical transmembrane segment at 179-203 (MSYMVYFNFFGCVLPPLLIMLVIYI) threads the bilayer. The Cytoplasmic segment spans residues 204 to 235 (KIFLVACRQLQRTELMDHSRTTLQREIHAAKS). Residues 236–259 (LAMIVGIFALCWLPVHAVNCVTLF) traverse the membrane as a helical segment. Asn-254 provides a ligand contact to adenosine. Residues 260–267 (QPAQGKNK) lie on the Extracellular side of the membrane. A helical membrane pass occupies residues 268 to 291 (PKWAMNMAILLSHANSVVNPIVYA). Residues Ser-279 and His-280 each contribute to the adenosine site. Over 292–332 (YRNRDFRYTFHKIISRYLLCQADVKSGNGQAGVQPALGVGL) the chain is Cytoplasmic. Residue Cys-311 is the site of S-palmitoyl cysteine attachment.

This sequence belongs to the G-protein coupled receptor 1 family.

It is found in the cell membrane. Receptor for adenosine. The activity of this receptor is mediated by G proteins which activate adenylyl cyclase. This Homo sapiens (Human) protein is Adenosine receptor A2b (ADORA2B).